Reading from the N-terminus, the 320-residue chain is Aspartate carbamoyltransferase catalytic subunit (320 aa).

Residues R70 and T71 each contribute to the carbamoyl phosphate site. L-aspartate is bound at residue K98. 3 residues coordinate carbamoyl phosphate: R120, H150, and Q153. L-aspartate-binding residues include R184 and R239. The carbamoyl phosphate site is built by G280 and P281.

The protein belongs to the aspartate/ornithine carbamoyltransferase superfamily. ATCase family. Heterododecamer (2C3:3R2) of six catalytic PyrB chains organized as two trimers (C3), and six regulatory PyrI chains organized as three dimers (R2).

It catalyses the reaction carbamoyl phosphate + L-aspartate = N-carbamoyl-L-aspartate + phosphate + H(+). The protein operates within pyrimidine metabolism; UMP biosynthesis via de novo pathway; (S)-dihydroorotate from bicarbonate: step 2/3. In terms of biological role, catalyzes the condensation of carbamoyl phosphate and aspartate to form carbamoyl aspartate and inorganic phosphate, the committed step in the de novo pyrimidine nucleotide biosynthesis pathway. The polypeptide is Aspartate carbamoyltransferase catalytic subunit (Xylella fastidiosa (strain Temecula1 / ATCC 700964)).